We begin with the raw amino-acid sequence, 336 residues long: D-erythrose-4-phosphate dehydrogenase (336 aa).

An NAD(+)-binding site is contributed by 11 to 12 (RI). Substrate is bound by residues 153–155 (SCT), Arg199, 212–213 (TR), and Arg235. The active-site Nucleophile is Cys154. Asn317 lines the NAD(+) pocket.

This sequence belongs to the glyceraldehyde-3-phosphate dehydrogenase family. Epd subfamily. Homotetramer.

It is found in the cytoplasm. It catalyses the reaction D-erythrose 4-phosphate + NAD(+) + H2O = 4-phospho-D-erythronate + NADH + 2 H(+). It functions in the pathway cofactor biosynthesis; pyridoxine 5'-phosphate biosynthesis; pyridoxine 5'-phosphate from D-erythrose 4-phosphate: step 1/5. Catalyzes the NAD-dependent conversion of D-erythrose 4-phosphate to 4-phosphoerythronate. This chain is D-erythrose-4-phosphate dehydrogenase, found in Alteromonas mediterranea (strain DSM 17117 / CIP 110805 / LMG 28347 / Deep ecotype).